The chain runs to 879 residues: MKFTKTNDLRDAYLKFFESKDHLKLESFSLVPQNDKSLLLINAGMAPLKPYFTGLQEPPKKRITTCQKCVRTGDIDNVGITSRHGTFFEMLGNFSFGDYFKKEIIPWAWEFLTGVLELPKEKLYVTIYLDDDEAYEYWTTLTDVDKTHIFRLGKEDNFWEHGAGPCGPCTEIHFSRTDEVPTNSEKFVELSDEDKIIEVWNLVFTQFDGDGKGNYEKLASTNIDTGMGLERLAVVMQNKNSIFEIDTLENILKEVGNLANVKYGEDNKIDVSLRIITDHIRSITFMISDDIMPSNEGRGYVLRRLLRRAARHGKTLGIKDAFLCNLCDVVIRDCGSAYSDLEAKKDYIKKVIKIEEDKFRETLDSGMEILNNLISELKENNEKVLKGADGFKLYDTFGFPMELTKEILEDEDLSLDEDGFHKEMKEQRERARSARKTSNYMGTDVKTLDVISGEIETTFDGYENDSLIAEVKTLVNGEDFTNSIIEGNNAVVVTDVTPFYAEMGGQIGDTGTIYNDNFKGKVLDTKKNIGGKIIHFVEAISGELKVGDKVKLEVDNARRENIKRNHTATHLLDAALVKVLGSHVHQAGSYVSADRLRFDFSHFEGVKEEELLKVEQLVNEAIMSVTPVNTTEMDLQEAKNSGAVGIFDDKYAEKVRVVCAGEYSKELCGGTHIDNTGKIGLFKIISENGIAAGTRRIEAVTGIEAYKWVNEKAELLKHISGKLKCSEKEITIKLDQQSKEIKEKEKEITNLKSKFASMEINDIINSVKDVKGINVVTYALTDVDGEALRGLCEKVRDKVNNSLTLLTSSIDGKVVICAMADKEAVSKGAHCGKVIKEAATILGGGGGGRPDMAQAGGKLPEKISDALDSVYKIVETLVK.

4 residues coordinate Zn(2+): histidine 566, histidine 570, cysteine 668, and histidine 672.

This sequence belongs to the class-II aminoacyl-tRNA synthetase family. Requires Zn(2+) as cofactor.

It is found in the cytoplasm. It carries out the reaction tRNA(Ala) + L-alanine + ATP = L-alanyl-tRNA(Ala) + AMP + diphosphate. Functionally, catalyzes the attachment of alanine to tRNA(Ala) in a two-step reaction: alanine is first activated by ATP to form Ala-AMP and then transferred to the acceptor end of tRNA(Ala). Also edits incorrectly charged Ser-tRNA(Ala) and Gly-tRNA(Ala) via its editing domain. The polypeptide is Alanine--tRNA ligase (Clostridium botulinum (strain Alaska E43 / Type E3)).